We begin with the raw amino-acid sequence, 315 residues long: L-threo-3-deoxy-hexylosonate aldolase (315 aa).

Residue 50–51 (SN) participates in substrate binding. Lysine 174 acts as the Schiff-base intermediate with substrate in catalysis.

The protein belongs to the DapA family.

It catalyses the reaction 2-dehydro-3-deoxy-L-galactonate = L-glyceraldehyde + pyruvate. The protein operates within carbohydrate acid metabolism. Mediates the conversion of 2-dehydro-3-deoxy-L-galactonate to pyruvate and L-glyceraldehyde in D-galacturonate catabolic process. This chain is L-threo-3-deoxy-hexylosonate aldolase (lga1), found in Hypocrea jecorina (Trichoderma reesei).